The following is a 193-amino-acid chain: SCO1 protein homolog (193 aa).

A signal peptide spans 1-18 (MKVIKGLTAGLIFLFLCA). Cys-19 carries N-palmitoyl cysteine lipidation. A lipid anchor (S-diacylglycerol cysteine) is attached at Cys-19. The Thioredoxin domain maps to 26–191 (DPLNYEVEPF…IISDVKSAST (166 aa)). Residues Cys-64, Cys-68, and His-154 each contribute to the Cu cation site.

Belongs to the SCO1/2 family. As to quaternary structure, monomer.

It is found in the cell membrane. Its function is as follows. Necessary for insertion of copper into the active site of cytochrome c oxidase. May play a role in copper homeostasis or redox signaling. The chain is SCO1 protein homolog (ypmQ) from Bacillus subtilis (strain 168).